Consider the following 1406-residue polypeptide: DNA-directed RNA polymerase subunit beta' (1406 aa).

The Zn(2+) site is built by cysteine 70, cysteine 72, cysteine 85, and cysteine 88. Mg(2+) is bound by residues aspartate 460, aspartate 462, and aspartate 464. Residues cysteine 814, cysteine 889, cysteine 896, and cysteine 899 each coordinate Zn(2+).

This sequence belongs to the RNA polymerase beta' chain family. The RNAP catalytic core consists of 2 alpha, 1 beta, 1 beta' and 1 omega subunit. When a sigma factor is associated with the core the holoenzyme is formed, which can initiate transcription. Requires Mg(2+) as cofactor. The cofactor is Zn(2+).

It carries out the reaction RNA(n) + a ribonucleoside 5'-triphosphate = RNA(n+1) + diphosphate. Its function is as follows. DNA-dependent RNA polymerase catalyzes the transcription of DNA into RNA using the four ribonucleoside triphosphates as substrates. The chain is DNA-directed RNA polymerase subunit beta' from Psychromonas ingrahamii (strain DSM 17664 / CCUG 51855 / 37).